We begin with the raw amino-acid sequence, 623 residues long: Chaperone protein DnaK (623 aa).

Position 197 is a phosphothreonine; by autocatalysis (Thr-197). The span at 595 to 615 (AENMYKKDEPNTANDKKKKDD) shows a compositional bias: basic and acidic residues. The interval 595–623 (AENMYKKDEPNTANDKKKKDDDVIDAEVE) is disordered.

This sequence belongs to the heat shock protein 70 family.

Its function is as follows. Acts as a chaperone. The polypeptide is Chaperone protein DnaK (Campylobacter jejuni subsp. jejuni serotype O:6 (strain 81116 / NCTC 11828)).